A 183-amino-acid polypeptide reads, in one-letter code: MDPSQNPNIVHATTIISVRRGGHVAVAGDGQVTLGHTVMKGNARKVRRLGREGQVLAGFAGAAADAFTLFELFEAKLDKHGQLTRAAVELAKDWRTERRLGKLEALLAVADKETSLIISGTGDVVEPEDGIIAIGSGGSYALSAARALLAHTQLDAKTIAAEAINIAGDICIYTNRNVVVEEL.

Thr-13 is a catalytic residue. The Na(+) site is built by Gly-168, Cys-171, and Thr-174.

This sequence belongs to the peptidase T1B family. HslV subfamily. In terms of assembly, a double ring-shaped homohexamer of HslV is capped on each side by a ring-shaped HslU homohexamer. The assembly of the HslU/HslV complex is dependent on binding of ATP.

The protein localises to the cytoplasm. It catalyses the reaction ATP-dependent cleavage of peptide bonds with broad specificity.. Allosterically activated by HslU binding. Protease subunit of a proteasome-like degradation complex believed to be a general protein degrading machinery. This Xanthomonas axonopodis pv. citri (strain 306) protein is ATP-dependent protease subunit HslV.